An 859-amino-acid chain; its full sequence is ATP-dependent DNA helicase PIF1 (859 aa).

A mitochondrion-targeting transit peptide spans 1-45 (MPKWIRSTLNHIIPRRPFICSFNSFLLLKNVSHAKLSFSMSSRGF). A phosphoserine mark is found at serine 70 and serine 72. A compositionally biased stretch (polar residues) spans 142–157 (NSFDQSSQKKSRSTGF). Residues 142–183 (NSFDQSSQKKSRSTGFKNPLRPALKKESSFDELQNSSISQER) form a disordered region. Phosphoserine is present on serine 169. Residues 172 to 182 (DELQNSSISQE) show a composition bias toward polar residues. ATP is bound at residue 258 to 265 (GSAGTGKS). Serine 584 is subject to Phosphoserine. The DNA-binding element occupies 727-746 (QAYVALSRAVSREGLQVLNF). The interval 782–859 (KRKLDYAPGP…GQDTEDHILE (78 aa)) is disordered. Residues 800–809 (KSNSPAPISA) are compositionally biased toward low complexity. Positions 844–859 (VSDEPRGQDTEDHILE) are enriched in basic and acidic residues.

This sequence belongs to the helicase family. PIF1 subfamily. Monomer in solution. DNA binding induces dimerization. Associates with mitochondrial and telomeric DNA. Binding to mtDNA is non-specific and the protein seems to coat the entire mtDNA molecule. Binds to the telomerase RNA TLC1. Interacts with the mitochondrial single-strand DNA-binding protein RIM1. The cofactor is Mg(2+). It depends on Mn(2+) as a cofactor. In terms of processing, phosphorylated. Undergoes RAD53-dependent phosphorylation in response to loss of mtDNA.

It localises to the nucleus. The protein resides in the nucleolus. It is found in the mitochondrion inner membrane. The enzyme catalyses Couples ATP hydrolysis with the unwinding of duplex DNA at the replication fork by translocating in the 5'-3' direction. This creates two antiparallel DNA single strands (ssDNA). The leading ssDNA polymer is the template for DNA polymerase III holoenzyme which synthesizes a continuous strand.. The catalysed reaction is ATP + H2O = ADP + phosphate + H(+). Functionally, DNA-dependent ATPase and 5'-3' DNA helicase required for the maintenance of both mitochondrial and nuclear genome stability. Efficiently unwinds G-quadruplex (G4) DNA structures and forked RNA-DNA hybrids. Appears to move along DNA in single nucleotide or base pair steps, powered by hydrolysis of 1 molecule of ATP. Processes at an unwinding rate of about 75 bp/s. Resolves G4 structures, preventing replication pausing and double-strand breaks (DSBs) at G4 motifs. Involved in the maintenance of telomeric DNA. Inhibits telomere elongation, de novo telomere formation and telomere addition to DSBs via catalytic inhibition of telomerase. Reduces the processivity of telomerase by displacing active telomerase from DNA ends. Releases telomerase by unwinding the short telomerase RNA/telomeric DNA hybrid that is the intermediate in the telomerase reaction. Involved in the maintenance of ribosomal (rDNA). Required for efficient fork arrest at the replication fork barrier within rDNA. Involved in the maintenance of mitochondrial (mtDNA). Required to maintain mtDNA under conditions that introduce dsDNA breaks in mtDNA, either preventing or repairing dsDNA breaks. May inhibit replication progression to allow time for repair. May have a general role in chromosomal replication by affecting Okazaki fragment maturation. May have a role in conjunction with DNA2 helicase/nuclease in 5'-flap extension during Okazaki fragment processing. This chain is ATP-dependent DNA helicase PIF1, found in Saccharomyces cerevisiae (strain YJM789) (Baker's yeast).